The primary structure comprises 100 residues: Large ribosomal subunit protein bL21 (100 aa).

The protein belongs to the bacterial ribosomal protein bL21 family. In terms of assembly, part of the 50S ribosomal subunit. Contacts protein L20.

Its function is as follows. This protein binds to 23S rRNA in the presence of protein L20. This chain is Large ribosomal subunit protein bL21, found in Corynebacterium jeikeium (strain K411).